The chain runs to 91 residues: Large ribosomal subunit protein bL27 (91 aa).

The interval 1-24 is disordered; that stretch reads MAHKKGVGSSRNGRDSNPKMRGVK.

This sequence belongs to the bacterial ribosomal protein bL27 family.

This chain is Large ribosomal subunit protein bL27, found in Chloroflexus aggregans (strain MD-66 / DSM 9485).